A 335-amino-acid polypeptide reads, in one-letter code: Tryptophan--tRNA ligase (335 aa).

ATP-binding positions include 9-11 (QST) and 17-18 (GN). Residues 10-18 (STNSLTLGN) carry the 'HIGH' region motif. Asp137 contacts L-tryptophan. Residues 149–151 (GKD), Ile189, and 198–202 (KMSKS) each bind ATP. Positions 198–202 (KMSKS) match the 'KMSKS' region motif.

It belongs to the class-I aminoacyl-tRNA synthetase family. In terms of assembly, homodimer.

It localises to the cytoplasm. It catalyses the reaction tRNA(Trp) + L-tryptophan + ATP = L-tryptophyl-tRNA(Trp) + AMP + diphosphate + H(+). Catalyzes the attachment of tryptophan to tRNA(Trp). The chain is Tryptophan--tRNA ligase from Malacoplasma penetrans (strain HF-2) (Mycoplasma penetrans).